We begin with the raw amino-acid sequence, 244 residues long: Ribosome maturation factor RimM (244 aa).

The interval 1–58 (MSERDSGSSGPVKAKAAAPRAKTSGQAPFGAFVRKPVEKTEGKAKANAANAGSGATEM) is disordered. Positions 13-22 (KAKAAAPRAK) are enriched in low complexity. Over residues 35–44 (KPVEKTEGKA) the composition is skewed to basic and acidic residues. Residues 45–57 (KANAANAGSGATE) are compositionally biased toward low complexity. One can recognise a PRC barrel domain in the interval 163 to 244 (ADEFYWVDLL…QITVDWEADY (82 aa)).

This sequence belongs to the RimM family. As to quaternary structure, binds ribosomal protein uS19.

It localises to the cytoplasm. In terms of biological role, an accessory protein needed during the final step in the assembly of 30S ribosomal subunit, possibly for assembly of the head region. Essential for efficient processing of 16S rRNA. May be needed both before and after RbfA during the maturation of 16S rRNA. It has affinity for free ribosomal 30S subunits but not for 70S ribosomes. The polypeptide is Ribosome maturation factor RimM (Paraburkholderia xenovorans (strain LB400)).